Here is a 240-residue protein sequence, read N- to C-terminus: Small ribosomal subunit protein uS2c (240 aa).

The protein belongs to the universal ribosomal protein uS2 family.

It is found in the plastid. The protein resides in the chloroplast. This is Small ribosomal subunit protein uS2c (rps2) from Euglena gracilis.